The following is a 328-amino-acid chain: Malate dehydrogenase (328 aa).

Residue 11-17 coordinates NAD(+); sequence GAAGQIG. 2 residues coordinate substrate: R94 and R100. Residues N107, Q114, and 131–133 each bind NAD(+); that span reads VGN. The substrate site is built by N133 and R164. H189 functions as the Proton acceptor in the catalytic mechanism.

Belongs to the LDH/MDH superfamily. MDH type 2 family.

The enzyme catalyses (S)-malate + NAD(+) = oxaloacetate + NADH + H(+). Catalyzes the reversible oxidation of malate to oxaloacetate. The polypeptide is Malate dehydrogenase (Xylella fastidiosa (strain Temecula1 / ATCC 700964)).